We begin with the raw amino-acid sequence, 449 residues long: Integrator complex subunit 15 (449 aa).

It belongs to the Integrator subunit 15 family. In terms of assembly, component of the Integrator complex, composed of core subunits INTS1, INTS2, INTS3, INTS4, INTS5, INTS6, INTS7, INTS8, INTS9/RC74, INTS10, INTS11/CPSF3L, INTS12, INTS13, INTS14 and INTS15. The core complex associates with protein phosphatase 2A subunits PPP2CA and PPP2R1A, to form the Integrator-PP2A (INTAC) complex. INTS15 is part of the tail subcomplex, composed of INTS10, INTS13, INTS14 and INTS15.

The protein localises to the nucleus. It localises to the chromosome. Its function is as follows. Component of the integrator complex, a multiprotein complex that terminates RNA polymerase II (Pol II) transcription in the promoter-proximal region of genes. The integrator complex provides a quality checkpoint during transcription elongation by driving premature transcription termination of transcripts that are unfavorably configured for transcriptional elongation: the complex terminates transcription by (1) catalyzing dephosphorylation of the C-terminal domain (CTD) of Pol II subunit POLR2A/RPB1 and SUPT5H/SPT5, (2) degrading the exiting nascent RNA transcript via endonuclease activity and (3) promoting the release of Pol II from bound DNA. The integrator complex is also involved in terminating the synthesis of non-coding Pol II transcripts, such as enhancer RNAs (eRNAs), small nuclear RNAs (snRNAs), telomerase RNAs and long non-coding RNAs (lncRNAs). INTS15 is part of the integrator tail module that acts as a platform for the recruitment of transcription factors at promoters. Within the integrator complex, INTS15 is required to bridge different integrator modules. In Homo sapiens (Human), this protein is Integrator complex subunit 15.